We begin with the raw amino-acid sequence, 87 residues long: Large ribosomal subunit protein eL20 (87 aa).

This sequence belongs to the eukaryotic ribosomal protein eL20 family. In terms of assembly, part of the 50S ribosomal subunit. Binds 23S rRNA.

This is Large ribosomal subunit protein eL20 from Hyperthermus butylicus (strain DSM 5456 / JCM 9403 / PLM1-5).